The primary structure comprises 351 residues: Probable aldo-keto reductase 2 (351 aa).

The active-site Proton donor is the Tyr-67. Residue His-134 coordinates substrate. Ser-213 to Gly-223 is a binding site for NADP(+). The disordered stretch occupies residues Tyr-317 to Gln-351. Positions Met-332–Gln-351 are enriched in polar residues.

This sequence belongs to the aldo/keto reductase family.

The chain is Probable aldo-keto reductase 2 from Oryza sativa subsp. indica (Rice).